A 457-amino-acid chain; its full sequence is ERV-H1 provirus ancestral Env polyprotein (457 aa).

The signal sequence occupies residues 1–35 (MIFAGKAPSNTSTLMKFYSLILYSLLFSFPFLCHP). N-linked (GlcNAc...) asparagine glycans are attached at residues asparagine 10 and asparagine 47. The CXXC signature appears at 64 to 67 (CWLC). N-linked (GlcNAc...) asparagine glycans are attached at residues asparagine 197, asparagine 222, asparagine 265, asparagine 283, asparagine 352, and asparagine 370. Residues 388 to 408 (VIPLIPLMFGLGLSASTIALS) are fusion peptide.

Belongs to the gamma type-C retroviral envelope protein family. HERV class-I H env subfamily. The surface (SU) and transmembrane (TM) proteins form a heterodimer. SU and TM are attached by noncovalent interactions or by a labile interchain disulfide bond. In terms of processing, specific enzymatic cleavages in vivo yield the mature SU and TM proteins. Post-translationally, the CXXC motif is highly conserved across a broad range of retroviral envelope proteins. It is thought to participate in the formation of a labile disulfide bond possibly with the CX6CC motif present in the transmembrane protein.

The protein resides in the virion. In terms of biological role, retroviral envelope proteins mediate receptor recognition and membrane fusion during early infection. Endogenous envelope proteins may have kept, lost or modified their original function during evolution. Functionally, SU mediates receptor recognition. TM anchors the envelope heterodimer to the viral membrane through one transmembrane domain. The other hydrophobic domain, called fusion peptide, mediates fusion of the viral membrane with the target cell membrane. The protein is ERV-H1 provirus ancestral Env polyprotein of Pan troglodytes (Chimpanzee).